Reading from the N-terminus, the 275-residue chain is Light-independent protochlorophyllide reductase iron-sulfur ATP-binding protein (275 aa).

Residues 12–17 (GIGKST) and lysine 41 contribute to the ATP site. Serine 16 serves as a coordination point for Mg(2+). The [4Fe-4S] cluster site is built by cysteine 97 and cysteine 131. 182 to 183 (NR) contributes to the ATP binding site.

Belongs to the NifH/BchL/ChlL family. Homodimer. Protochlorophyllide reductase is composed of three subunits; BchL, BchN and BchB. The cofactor is [4Fe-4S] cluster.

The catalysed reaction is chlorophyllide a + oxidized 2[4Fe-4S]-[ferredoxin] + 2 ADP + 2 phosphate = protochlorophyllide a + reduced 2[4Fe-4S]-[ferredoxin] + 2 ATP + 2 H2O. It participates in porphyrin-containing compound metabolism; bacteriochlorophyll biosynthesis (light-independent). In terms of biological role, component of the dark-operative protochlorophyllide reductase (DPOR) that uses Mg-ATP and reduced ferredoxin to reduce ring D of protochlorophyllide (Pchlide) to form chlorophyllide a (Chlide). This reaction is light-independent. The L component serves as a unique electron donor to the NB-component of the complex, and binds Mg-ATP. In Chlorobium phaeobacteroides (strain BS1), this protein is Light-independent protochlorophyllide reductase iron-sulfur ATP-binding protein.